We begin with the raw amino-acid sequence, 308 residues long: Cytochrome c biogenesis protein CcsA (308 aa).

A run of 7 helical transmembrane segments spans residues 2 to 22, 44 to 64, 71 to 91, 143 to 163, 212 to 232, 247 to 267, and 273 to 293; these read IVST…SILI, GMLI…IYLG, LSES…IGYF, MILG…LMVI, VISL…VWAN, WAFI…NINL, and AIVA…VNLV.

Belongs to the CcmF/CycK/Ccl1/NrfE/CcsA family. May interact with Ccs1.

It is found in the plastid membrane. Required during biogenesis of c-type cytochromes (cytochrome c6 and cytochrome f) at the step of heme attachment. This is Cytochrome c biogenesis protein CcsA from Cuscuta reflexa (Southern Asian dodder).